Here is a 267-residue protein sequence, read N- to C-terminus: Mitochondrial S-adenosylmethionine carrier protein (267 aa).

Solcar repeat units follow at residues 4–77 (REFT…TKSV), 86–168 (LAPI…LKAV), and 177–265 (LDSW…VRRT). The next 6 helical transmembrane spans lie at 5 to 25 (EFTA…LTLF), 49 to 69 (IYAG…AFFV), 85 to 105 (NLAP…ACLI), 142 to 162 (RGYG…FPLW), 182 to 202 (AAVC…PLDV), and 238 to 258 (FAGS…FLGA).

It belongs to the mitochondrial carrier (TC 2.A.29) family.

The protein resides in the mitochondrion inner membrane. The catalysed reaction is S-adenosyl-L-homocysteine(out) + S-adenosyl-L-methionine(in) = S-adenosyl-L-homocysteine(in) + S-adenosyl-L-methionine(out). Its function is as follows. Mitochondrial S-adenosyl-L-methionine/S-adenosyl-L-homocysteine antiporter. Mediates the exchange of cytosolic S-adenosyl-L-methionine, the predominant methyl-group donor for macromolecule methylation processes, for mitochondrial S-adenosylhomocysteine(SAH), a by-product of methylation reactions. The protein is Mitochondrial S-adenosylmethionine carrier protein (slc25a26) of Danio rerio (Zebrafish).